The primary structure comprises 197 residues: Peptide deformylase (197 aa).

2 residues coordinate Fe cation: Cys106 and His148. Residue Glu149 is part of the active site. His152 contributes to the Fe cation binding site.

The protein belongs to the polypeptide deformylase family. Requires Fe(2+) as cofactor.

It catalyses the reaction N-terminal N-formyl-L-methionyl-[peptide] + H2O = N-terminal L-methionyl-[peptide] + formate. Removes the formyl group from the N-terminal Met of newly synthesized proteins. Requires at least a dipeptide for an efficient rate of reaction. N-terminal L-methionine is a prerequisite for activity but the enzyme has broad specificity at other positions. The protein is Peptide deformylase of Mycolicibacterium smegmatis (strain ATCC 700084 / mc(2)155) (Mycobacterium smegmatis).